Reading from the N-terminus, the 298-residue chain is MDQKQIEEIVRSVMASMGQDVPQPVAPSTQAGAKPQCAAPTVTESCALDLGSAEAKAWIGVENPHRADVLTELRRSTAARVCTGRAGPRPRTQALLRFLADHSRSKDTVLKEVPEEWVKAQGLLEVRSEISDKNLYLTRPDMGRRLSPEAIDALKSQCVMNPDVQVVVSDGLSTDAITANYEEILPPLLAGLKQAGLNVGTPFFVRYGRVKIEDQIGEILGAKVVILLVGERPGLGQSESLSCYAVYSPRVATTVEADRTCISNIHQGGTPPVEAAAVIVDLAKRMLEQKASGINMTR.

Adenosylcob(III)alamin-binding residues include V210, E231, and C261.

This sequence belongs to the EutC family. In terms of assembly, the basic unit is a heterodimer which dimerizes to form tetramers. The heterotetramers trimerize; 6 large subunits form a core ring with 6 small subunits projecting outwards. Adenosylcob(III)alamin serves as cofactor.

The protein localises to the bacterial microcompartment. The catalysed reaction is ethanolamine = acetaldehyde + NH4(+). It functions in the pathway amine and polyamine degradation; ethanolamine degradation. Catalyzes the deamination of various vicinal amino-alcohols to oxo compounds. Allows this organism to utilize ethanolamine as the sole source of nitrogen and carbon in the presence of external vitamin B12. In Salmonella agona (strain SL483), this protein is Ethanolamine ammonia-lyase small subunit.